Reading from the N-terminus, the 103-residue chain is Translation initiation factor 1A (103 aa).

In terms of domain architecture, S1-like spans 11 to 86 (TRVRTPRENE…EKCDVIWRYT (76 aa)).

This sequence belongs to the eIF-1A family.

Functionally, seems to be required for maximal rate of protein biosynthesis. Enhances ribosome dissociation into subunits and stabilizes the binding of the initiator Met-tRNA(I) to 40 S ribosomal subunits. This is Translation initiation factor 1A (eIF1A) from Methanococcus maripaludis (strain C5 / ATCC BAA-1333).